Reading from the N-terminus, the 293-residue chain is Small ribosomal subunit protein uS5 (293 aa).

Positions 1 to 56 (MADDAGAAGGPGGPGGPGMGNRGGFRGGFGSGIRGRGRGRGRGRGRGRGARGGKAE) are disordered. An N-acetylalanine modification is found at alanine 2. Positions 7–34 (AAGGPGGPGGPGMGNRGGFRGGFGSGIR) are enriched in gly residues. Residues 35-51 (GRGRGRGRGRGRGRGAR) are compositionally biased toward basic residues. Residues lysine 54 and lysine 58 each participate in a glycyl lysine isopeptide (Lys-Gly) (interchain with G-Cter in ubiquitin) cross-link. The S5 DRBM domain occupies 102 to 165 (LKDEVLKIMP…ILAKLSIVPV (64 aa)). Phosphothreonine is present on threonine 252. Lysine 263 bears the N6-acetyllysine mark. Serine 264 carries the phosphoserine modification. Threonine 270 bears the Phosphothreonine mark. The residue at position 275 (lysine 275) is an N6-acetyllysine; alternate. Lysine 275 is covalently cross-linked (Glycyl lysine isopeptide (Lys-Gly) (interchain with G-Cter in SUMO1); alternate). A Glycyl lysine isopeptide (Lys-Gly) (interchain with G-Cter in SUMO2); alternate cross-link involves residue lysine 275. Lysine 275 participates in a covalent cross-link: Glycyl lysine isopeptide (Lys-Gly) (interchain with G-Cter in ubiquitin); alternate. Serine 281 is modified (phosphoserine).

Belongs to the universal ribosomal protein uS5 family. In terms of assembly, component of the small ribosomal subunit. Interacts with zinc finger protein ZNF277 (via zinc-finger domains); the interaction is direct; the interaction is extra-ribosomal. Interaction with ZNF277 competes with the binding of RPS2 to protein arginine methyltransferase PRMT3. Citrullinated by PADI4 in the Arg/Gly-rich region. Post-translationally, asymmetric arginine dimethylation by PRMT3 occurs at multiple sites in the Arg/Gly-rich region. In terms of processing, monoubiquitinated at Lys-54 and Lys-58 by RNF10 when a ribosome has stalled during translation, leading to its degradation by the proteasome. Deubiquitinated at Lys-54 and Lys-58 by USP10, preventing degradation by the proteasome and promoting 40S ribosome subunit recycling following ribosome dissociation.

The protein resides in the cytoplasm. The protein localises to the nucleus. Its subcellular location is the nucleolus. In terms of biological role, component of the ribosome, a large ribonucleoprotein complex responsible for the synthesis of proteins in the cell. The small ribosomal subunit (SSU) binds messenger RNAs (mRNAs) and translates the encoded message by selecting cognate aminoacyl-transfer RNA (tRNA) molecules. The large subunit (LSU) contains the ribosomal catalytic site termed the peptidyl transferase center (PTC), which catalyzes the formation of peptide bonds, thereby polymerizing the amino acids delivered by tRNAs into a polypeptide chain. The nascent polypeptides leave the ribosome through a tunnel in the LSU and interact with protein factors that function in enzymatic processing, targeting, and the membrane insertion of nascent chains at the exit of the ribosomal tunnel. Plays a role in the assembly and function of the 40S ribosomal subunit. Mutations in this protein affects the control of translational fidelity. Involved in nucleolar processing of pre-18S ribosomal RNA and ribosome assembly. This Homo sapiens (Human) protein is Small ribosomal subunit protein uS5 (RPS2).